Here is a 63-residue protein sequence, read N- to C-terminus: Large ribosomal subunit protein uL29 (63 aa).

It belongs to the universal ribosomal protein uL29 family.

This Shewanella pealeana (strain ATCC 700345 / ANG-SQ1) protein is Large ribosomal subunit protein uL29.